The sequence spans 447 residues: GTPase Der (447 aa).

EngA-type G domains are found at residues 4-165 and 180-357; these read QIIT…PEEE and LQIV…KIWN. Residues 10–17, 57–61, 119–122, 186–193, 233–237, and 298–301 each bind GTP; these read GRPNVGKS, DTPGL, NKCE, GRPNAGKS, DTAGL, and NKWD. The 86-residue stretch at 358–443 folds into the KH-like domain; that stretch reads KKITTSKLNE…PIRFTYVKTK (86 aa).

The protein belongs to the TRAFAC class TrmE-Era-EngA-EngB-Septin-like GTPase superfamily. EngA (Der) GTPase family. Associates with the 50S ribosomal subunit.

GTPase that plays an essential role in the late steps of ribosome biogenesis. The sequence is that of GTPase Der from Rickettsia rickettsii (strain Sheila Smith).